The primary structure comprises 608 residues: AAA ATPase forming ring-shaped complexes (608 aa).

Positions 45 to 79 (AQEYDAVLRRLSAAEATRDNMSRQIRGAGEKNRKL) form a coiled coil. 302-307 (GNGKTM) contributes to the ATP binding site.

The protein belongs to the AAA ATPase family. Homohexamer. Assembles into a hexameric ring structure.

In Rothia mucilaginosa (strain DY-18) (Stomatococcus mucilaginosus), this protein is AAA ATPase forming ring-shaped complexes.